A 526-amino-acid polypeptide reads, in one-letter code: Bifunctional purine biosynthesis protein PurH (526 aa).

Residues 1 to 145 (MSKAPLALLS…KNHAHVGIVT (145 aa)) enclose the MGS-like domain.

This sequence belongs to the PurH family.

It carries out the reaction (6R)-10-formyltetrahydrofolate + 5-amino-1-(5-phospho-beta-D-ribosyl)imidazole-4-carboxamide = 5-formamido-1-(5-phospho-D-ribosyl)imidazole-4-carboxamide + (6S)-5,6,7,8-tetrahydrofolate. The enzyme catalyses IMP + H2O = 5-formamido-1-(5-phospho-D-ribosyl)imidazole-4-carboxamide. Its pathway is purine metabolism; IMP biosynthesis via de novo pathway; 5-formamido-1-(5-phospho-D-ribosyl)imidazole-4-carboxamide from 5-amino-1-(5-phospho-D-ribosyl)imidazole-4-carboxamide (10-formyl THF route): step 1/1. The protein operates within purine metabolism; IMP biosynthesis via de novo pathway; IMP from 5-formamido-1-(5-phospho-D-ribosyl)imidazole-4-carboxamide: step 1/1. This chain is Bifunctional purine biosynthesis protein PurH, found in Psychrobacter arcticus (strain DSM 17307 / VKM B-2377 / 273-4).